Reading from the N-terminus, the 395-residue chain is Na(+)/H(+) antiporter NhaA 1 (395 aa).

Helical transmembrane passes span 11-31, 63-83, 99-119, 129-149, 158-178, 183-203, 223-243, 258-278, 282-302, 332-352, and 364-384; these read FFSSDASGGIVLIIAAALAMV, MLLWINDALMAVFFLLIGLEV, VFPVIAALGGMIVPALVYLAF, GWAIPAATDIAFALGVLALLG, IFLMALAIIDDLGAIVIIALF, LSMLSLGVAAAAIAVLMALNL, VLKSGVHATLAGVIVGFMIPL, VLHPWVAFMILPLFAFANAGV, GVTLAGLTSLLPLGIMAGLFI, IMAVGILCGIGFTMSIFIATL, and WAKLGILIGSVLSAVVGYLIL.

It belongs to the NhaA Na(+)/H(+) (TC 2.A.33) antiporter family.

Its subcellular location is the cell inner membrane. The enzyme catalyses Na(+)(in) + 2 H(+)(out) = Na(+)(out) + 2 H(+)(in). In terms of biological role, na(+)/H(+) antiporter that extrudes sodium in exchange for external protons. The sequence is that of Na(+)/H(+) antiporter NhaA 1 from Klebsiella pneumoniae subsp. pneumoniae (strain ATCC 700721 / MGH 78578).